Reading from the N-terminus, the 410-residue chain is uncharacterized protein (410 aa).

The span at 178-187 (QKNHRNQLST) shows a compositional bias: polar residues. 2 disordered regions span residues 178–203 (QKNH…QEHQ) and 236–272 (RAEQ…PTVQ). Over residues 188–198 (QKKQQQALQKA) the composition is skewed to low complexity. The span at 236–263 (RAEQAAREQEKREREALAQRQKAEEKRT) shows a compositional bias: basic and acidic residues.

This is an uncharacterized protein from Haemophilus influenzae (strain ATCC 51907 / DSM 11121 / KW20 / Rd).